The following is a 644-amino-acid chain: Major core protein OPG129 (644 aa).

The propeptide occupies 1 to 61 (MEAVVNSDVF…IVDDDFISAG (61 aa)). Residues 61-80 (GARNQRTKPKRAGNDQAQQT) form a disordered region.

Belongs to the orthopoxvirus OPG129 family. The 73-kDa precursor is cleaved to a mature protein of 60 kDa during virion maturation. Proteolytic cleavage of major core proteins OPG129, OPG136, and OPG098, which occurs at a late stage of core formation, is required for production of infectious mature virions (MV).

The protein resides in the virion. Its function is as follows. Major component of the virion core that undergoes proteolytic processing during the immature virion (IV) to mature virion (MV) transition. Essential for the formation of a structurally normal core. The polypeptide is Major core protein OPG129 (OPG129) (Variola virus (isolate Human/India/Ind3/1967) (VARV)).